We begin with the raw amino-acid sequence, 227 residues long: Uracil-DNA glycosylase (227 aa).

The active-site Proton acceptor is the Asp68.

Belongs to the uracil-DNA glycosylase (UDG) superfamily. UNG family.

The protein localises to the cytoplasm. It carries out the reaction Hydrolyzes single-stranded DNA or mismatched double-stranded DNA and polynucleotides, releasing free uracil.. Excises uracil residues from the DNA which can arise as a result of misincorporation of dUMP residues by DNA polymerase or due to deamination of cytosine. This is Uracil-DNA glycosylase from Mycobacterium sp. (strain JLS).